The following is a 317-amino-acid chain: Secreted frizzled-related protein 5 (317 aa).

The signal sequence occupies residues 1-29 (MRAAAAGGGVRTAALALLLGALHWAPARC). In terms of domain architecture, FZ spans 48 to 165 (SKPPQCLDIP…PLDNDLCIAV (118 aa)). Disulfide bonds link cysteine 53–cysteine 116, cysteine 63–cysteine 109, cysteine 100–cysteine 135, cysteine 124–cysteine 162, cysteine 128–cysteine 152, cysteine 181–cysteine 253, cysteine 184–cysteine 255, and cysteine 198–cysteine 303. An NTR domain is found at 181 to 303 (CAQCEMEHSA…AVKFMFSYPC (123 aa)).

It belongs to the secreted frizzled-related protein (sFRP) family. Highly expressed in the retinal pigment epithelium (RPE) and pancreas. Weak expression in heart, liver and muscle.

The protein resides in the secreted. Its function is as follows. Soluble frizzled-related proteins (sFRPS) function as modulators of Wnt signaling through direct interaction with Wnts. They have a role in regulating cell growth and differentiation in specific cell types. SFRP5 may be involved in determining the polarity of photoreceptor, and perhaps, other cells in the retina. The protein is Secreted frizzled-related protein 5 (SFRP5) of Homo sapiens (Human).